A 569-amino-acid chain; its full sequence is Urease subunit alpha (569 aa).

The Urease domain maps to G131–F569. Residues H136, H138, and K219 each contribute to the Ni(2+) site. The residue at position 219 (K219) is an N6-carboxylysine. Residue H221 coordinates substrate. H248 and H274 together coordinate Ni(2+). H322 acts as the Proton donor in catalysis. D362 contributes to the Ni(2+) binding site.

It belongs to the metallo-dependent hydrolases superfamily. Urease alpha subunit family. As to quaternary structure, heterotrimer of UreA (gamma), UreB (beta) and UreC (alpha) subunits. Three heterotrimers associate to form the active enzyme. It depends on Ni cation as a cofactor. Carboxylation allows a single lysine to coordinate two nickel ions.

Its subcellular location is the cytoplasm. It carries out the reaction urea + 2 H2O + H(+) = hydrogencarbonate + 2 NH4(+). The protein operates within nitrogen metabolism; urea degradation; CO(2) and NH(3) from urea (urease route): step 1/1. In Roseobacter denitrificans (strain ATCC 33942 / OCh 114) (Erythrobacter sp. (strain OCh 114)), this protein is Urease subunit alpha.